Consider the following 383-residue polypeptide: uncharacterized protein (383 aa).

To V.anguillarum virulence protein VirA.

Its function is as follows. Could have an enzymatic function. This is an uncharacterized protein from Sinorhizobium fredii (strain NBRC 101917 / NGR234).